A 640-amino-acid chain; its full sequence is MISWHDLYTVLTAVIPLYVAMILAYGSVRWWKIFSPDQCSGINRFVAIFAVPLLSFHFISTNNPYAMNLRFIAADTLQKIIMLSLLVLWANFTRSGSLEWSITIFSLSTLPNTLVMGIPLLIAMYGEYSGSLMVQIVVLQCIIWYTLLLFLFEFRGAKMLIMEQFPETAASIVSFKVESDVVSLDGHDFLETDAEIGDDGKLHVTVRKSNASRRSFCGPNMTPRPSNLTGAEIYSLSTTPRGSNFNHSDFYNMMGFPGGRLSNFGPADMYSVQSSRGPTPRPSNFEENCAMASSPRFGYYPGGGAGSYPAPNPEFSSTTTSTANKSVNKNPKDVNTNQQTTLPTGGKSNSHDAKELHMFVWSSNGSPVSDRAGLNVFGGAPDNDQGGRSDQGAKEIRMLVPDQSHNGETKAVAHPASGDFGGEQQFSFAGKEEEAERPKDAENGLNKLAPNSTAALQSKTGLGGAEASQRKNMPPASVMTRLILIMVWRKLIRNPNTYSSLIGLIWALVAFRWHVAMPKIIQQSISILSDAGLGMAMFSLGLFMALQPKLIACGNSVATFAMAVRFLTGPAVMAVAAIAIGLRGDLLRVAIVQAALPQGIVPFVFAKEYNVHPAILSTGVIFGMLIALPITLVYYILLGL.

The Extracellular segment spans residues methionine 1–leucine 7. The helical transmembrane segment at tyrosine 8–valine 28 threads the bilayer. Topologically, residues arginine 29–glutamine 38 are cytoplasmic. A helical membrane pass occupies residues cysteine 39–isoleucine 59. Residue valine 51 participates in (indol-3-yl)acetate binding. Residues serine 60–phenylalanine 71 lie on the Extracellular side of the membrane. The chain crosses the membrane as a helical span at residues isoleucine 72–phenylalanine 92. The Cytoplasmic segment spans residues threonine 93–serine 101. Residues isoleucine 102–isoleucine 122 traverse the membrane as a helical segment. Asparagine 112 and leucine 114 together coordinate (indol-3-yl)acetate. The Extracellular segment spans residues alanine 123–serine 131. A helical membrane pass occupies residues leucine 132–phenylalanine 152. Tyrosine 145 provides a ligand contact to (indol-3-yl)acetate. At glutamate 153–serine 500 the chain is on the cytoplasmic side. Residues serine 226, serine 243, and serine 283 each carry the phosphoserine modification. The interval alanine 310–histidine 351 is disordered. Polar residues predominate over residues glutamate 314 to serine 348. A Phosphothreonine modification is found at threonine 322. Position 366 is a phosphoserine (serine 366). 2 disordered regions span residues alanine 372–glutamine 391 and serine 404–lysine 471. The segment covering glycine 430–glutamate 442 has biased composition (basic and acidic residues). The span at alanine 449–threonine 460 shows a compositional bias: polar residues. A helical membrane pass occupies residues leucine 501–isoleucine 521. Topologically, residues glutamine 522 to serine 524 are extracellular. Residues isoleucine 525 to alanine 545 traverse the membrane as a helical segment. The Cytoplasmic segment spans residues leucine 546–threonine 559. Residues phenylalanine 560 to isoleucine 580 form a helical membrane-spanning segment. Topologically, residues glycine 581–aspartate 585 are extracellular. A helical membrane pass occupies residues leucine 586 to alanine 606. (indol-3-yl)acetate contacts are provided by isoleucine 600 and valine 601. Topologically, residues lysine 607–glycine 619 are cytoplasmic. Residues valine 620–leucine 640 form a helical membrane-spanning segment.

This sequence belongs to the auxin efflux carrier (TC 2.A.69.1) family. Homodimer. In terms of tissue distribution, predominantly expressed at the lateral side of shoot endodermis cells as well as root pericycle and columella cells.

Its subcellular location is the cell membrane. Auxin efflux carrier activity is competitively inhibited by naptalamate (N-1-naphthylphthalamic acid, NPA). Functionally, acts as a component of the auxin efflux carrier; this activity is enhanced when activated by PID-mediated phosphorylation. Seems to be involved in the lateral auxin transport system. Together with PIN4 and PIN7, involved in the connective auxin transport (CAT) that ensures communication across the shoot system, and modulates strigolactone-mediated shoot branching control. Binds auxins including indole-3-acetic acid (IAA). Coordinated polar localization of PIN3 is directly regulated by the vesicle trafficking process. This Arabidopsis thaliana (Mouse-ear cress) protein is Auxin efflux carrier component 3.